Here is a 336-residue protein sequence, read N- to C-terminus: tRNA N6-adenosine threonylcarbamoyltransferase (336 aa).

The Fe cation site is built by histidine 111 and histidine 115. Residues leucine 134 to glycine 138, aspartate 167, glycine 180, and asparagine 271 each bind substrate. Residue aspartate 299 participates in Fe cation binding.

It belongs to the KAE1 / TsaD family. It depends on Fe(2+) as a cofactor.

The protein resides in the cytoplasm. The catalysed reaction is L-threonylcarbamoyladenylate + adenosine(37) in tRNA = N(6)-L-threonylcarbamoyladenosine(37) in tRNA + AMP + H(+). Its function is as follows. Required for the formation of a threonylcarbamoyl group on adenosine at position 37 (t(6)A37) in tRNAs that read codons beginning with adenine. Is involved in the transfer of the threonylcarbamoyl moiety of threonylcarbamoyl-AMP (TC-AMP) to the N6 group of A37, together with TsaE and TsaB. TsaD likely plays a direct catalytic role in this reaction. The chain is tRNA N6-adenosine threonylcarbamoyltransferase from Thioalkalivibrio sulfidiphilus (strain HL-EbGR7).